Reading from the N-terminus, the 1034-residue chain is FERM domain-containing protein 4B (1034 aa).

The FERM domain occupies 59-361 (RHCQVHLLDD…SQHQFYLDRK (303 aa)). Position 372 is a phosphoserine (Ser-372). 2 coiled-coil regions span residues 417–450 (EVSE…ELKK) and 531–561 (KKKR…RCGK). Positions 542–971 (MKKLQEIENA…TQLTIGLSDY (430 aa)) are necessary for adherens junction and tight junction localization. Over residues 576–589 (PSESSSLSDTTTYD) the composition is skewed to low complexity. 4 disordered regions span residues 576–614 (PSES…ILPP), 635–698 (DTRQ…LESQ), 712–735 (FSLS…YTSQ), and 752–786 (TTQT…AQKD). Ser-608 is subject to Phosphoserine. Polar residues-rich tracts occupy residues 635 to 650 (DTRQ…SSPY) and 663 to 674 (MPTTPVLTRNAY). Residues 675 to 685 (SSSHLEPESSS) are compositionally biased toward low complexity. Ser-697 carries the post-translational modification Phosphoserine. The segment covering 713–722 (SLSKSQRSSS) has biased composition (low complexity). A compositionally biased stretch (polar residues) spans 769-781 (QNVSTSNSGSMPN). A Glycyl lysine isopeptide (Lys-Gly) (interchain with G-Cter in SUMO2) cross-link involves residue Lys-882. 2 disordered regions span residues 905-925 (RASG…SDRG) and 1004-1034 (DGTD…GTLV). Residues 906–920 (ASGQKDQGHSPQTSF) show a composition bias toward polar residues. Ser-915 is subject to Phosphoserine. Over residues 1018-1034 (SEQRLFWHEDSKPGTLV) the composition is skewed to basic and acidic residues. A Glycyl lysine isopeptide (Lys-Gly) (interchain with G-Cter in SUMO2) cross-link involves residue Lys-1029.

As to quaternary structure, interacts with CYTH3. Interacts with PARD3. Interacts with CYTH1.

It is found in the cytoplasm. The protein resides in the cytoskeleton. It localises to the cell junction. Its subcellular location is the tight junction. The protein localises to the adherens junction. Its function is as follows. Member of GRP1 signaling complexes that are acutely recruited to plasma membrane ruffles in response to insulin receptor signaling. May function as a scaffolding protein that regulates epithelial cell polarity by connecting ARF6 activation with the PAR3 complex. Plays a redundant role with FRMD4A in epithelial polarization. This Homo sapiens (Human) protein is FERM domain-containing protein 4B.